Here is a 272-residue protein sequence, read N- to C-terminus: Probable ribonuclease HI_0526 (272 aa).

An N-terminal signal peptide occupies residues 1-23 (MKKLTSILSLIVLVILAIWQYFT). Catalysis depends on residues His-148, Glu-195, and His-199.

It belongs to the RNase T2 family.

This is Probable ribonuclease HI_0526 from Haemophilus influenzae (strain ATCC 51907 / DSM 11121 / KW20 / Rd).